The sequence spans 331 residues: Centriolar satellite-associated tubulin polyglutamylase complex regulator 1 (331 aa).

Residues 1–111 are required for interaction with PCM1; that stretch reads MLSPERLALP…HCLLQLLCPD (111 aa). The required for interaction with TPGS1, LRRC49, and TTLL1 stretch occupies residues 1–225; sequence MLSPERLALP…SCPPPALVKE (225 aa). Residues 112–331 are required for interaction with TPGS2; sequence FPLELTQKAA…STEETDESET (220 aa). Residues 288 to 331 form a disordered region; it reads SPEASCLPSRTPPRVGSPWRPLHHSRKVDGESDGSTEETDESET. Over residues 318 to 331 the composition is skewed to acidic residues; the sequence is ESDGSTEETDESET. Residue S319 is modified to Phosphoserine.

The protein belongs to the CSTPP1 family. Interacts with PCM1. Interacts with TTLL1, TPGS1, TPGS2 and LRRC49; the interactions link CSTPP1 to the complex TPGC. Binds to alpha-tubulin.

The protein resides in the cytoplasm. It is found in the cytoskeleton. The protein localises to the microtubule organizing center. Its subcellular location is the centrosome. It localises to the centriolar satellite. Regulator of the tubulin polyglutamylase complex (TPGC) that controls cytoskeletal organization, nuclear shape, and cilium disassembly by balancing microtubule and actin assembly. Regulates the assembly and stability of the TPGC and thereby modulates polyglutamylation of the microtubule, which antagonizes MAP4 binding. In Homo sapiens (Human), this protein is Centriolar satellite-associated tubulin polyglutamylase complex regulator 1.